A 567-amino-acid polypeptide reads, in one-letter code: Laccase-3 (567 aa).

The signal sequence occupies residues 1-24; it reads MASSSSSRLLFLLSCSVLALLAGA. Plastocyanin-like domains are found at residues 32-148 and 158-310; these read IVQE…PREN and REVP…YDCG. An N-linked (GlcNAc...) asparagine glycan is attached at Asn78. The Cu cation site is built by His82, His84, His127, and His129. N-linked (GlcNAc...) asparagine glycosylation is found at Asn148, Asn187, Asn203, Asn298, Asn330, Asn379, and Asn389. The 137-residue stretch at 415–551 folds into the Plastocyanin-like 3 domain; that stretch reads DFPAYPPVQF…AMAFLVEDGY (137 aa). Residues His468, His471, His473, His530, Cys531, His532, and His536 each contribute to the Cu cation site.

It belongs to the multicopper oxidase family. Requires Cu cation as cofactor.

The protein resides in the secreted. Its subcellular location is the extracellular space. It localises to the apoplast. The catalysed reaction is 4 hydroquinone + O2 = 4 benzosemiquinone + 2 H2O. Lignin degradation and detoxification of lignin-derived products. The polypeptide is Laccase-3 (LAC3) (Oryza sativa subsp. japonica (Rice)).